A 503-amino-acid chain; its full sequence is GMP synthase [glutamine-hydrolyzing] (503 aa).

Positions 1–189 constitute a Glutamine amidotransferase type-1 domain; sequence MVLVLDFGSQ…FLELAGVKRD (189 aa). Cysteine 78 acts as the Nucleophile in catalysis. Catalysis depends on residues histidine 164 and glutamate 166. The GMPS ATP-PPase domain occupies 190 to 378; the sequence is WTPEHVLEEL…LGLPDTLRLR (189 aa). 217-223 provides a ligand contact to ATP; sequence SGGVDSS.

Homodimer.

It catalyses the reaction XMP + L-glutamine + ATP + H2O = GMP + L-glutamate + AMP + diphosphate + 2 H(+). It participates in purine metabolism; GMP biosynthesis; GMP from XMP (L-Gln route): step 1/1. Its function is as follows. Catalyzes the synthesis of GMP from XMP. The sequence is that of GMP synthase [glutamine-hydrolyzing] from Thermus thermophilus (strain ATCC 27634 / DSM 579 / HB8).